The chain runs to 404 residues: L-cysteine:1D-myo-inositol 2-amino-2-deoxy-alpha-D-glucopyranoside ligase 1 (404 aa).

Residue cysteine 47 coordinates Zn(2+). Residues 47–50 (CGIT), threonine 62, and 85–87 (NIT) each bind L-cysteinyl-5'-AMP. Positions 49–59 (ITPYDSTHLGH) match the 'HIGH' region motif. A 'ERGGDP' region motif is present at residues 188-193 (ERGGDP). Tryptophan 228 contacts L-cysteinyl-5'-AMP. Position 232 (cysteine 232) interacts with Zn(2+). 250 to 252 (GSD) contacts L-cysteinyl-5'-AMP. Zn(2+) is bound at residue histidine 257. An L-cysteinyl-5'-AMP-binding site is contributed by isoleucine 284. Residues 290-294 (KMSKS) carry the 'KMSKS' region motif.

It belongs to the class-I aminoacyl-tRNA synthetase family. MshC subfamily. As to quaternary structure, monomer. Zn(2+) is required as a cofactor.

The catalysed reaction is 1D-myo-inositol 2-amino-2-deoxy-alpha-D-glucopyranoside + L-cysteine + ATP = 1D-myo-inositol 2-(L-cysteinylamino)-2-deoxy-alpha-D-glucopyranoside + AMP + diphosphate + H(+). Functionally, catalyzes the ATP-dependent condensation of GlcN-Ins and L-cysteine to form L-Cys-GlcN-Ins. This chain is L-cysteine:1D-myo-inositol 2-amino-2-deoxy-alpha-D-glucopyranoside ligase 1, found in Corynebacterium jeikeium (strain K411).